The chain runs to 310 residues: Tyrosine recombinase XerC (310 aa).

The 92-residue stretch at 1–92 (MDELIKEFDR…SLRAFFKYLH (92 aa)) folds into the Core-binding (CB) domain. Positions 113 to 300 (YIPAVLSVDE…SVNRLMAVYD (188 aa)) constitute a Tyr recombinase domain. Residues Arg-153, Lys-177, His-252, Arg-255, and His-278 contribute to the active site. Tyr-287 (O-(3'-phospho-DNA)-tyrosine intermediate) is an active-site residue.

The protein belongs to the 'phage' integrase family. XerC subfamily. In terms of assembly, forms a cyclic heterotetrameric complex composed of two molecules of XerC and two molecules of XerD.

The protein resides in the cytoplasm. Functionally, site-specific tyrosine recombinase, which acts by catalyzing the cutting and rejoining of the recombining DNA molecules. The XerC-XerD complex is essential to convert dimers of the bacterial chromosome into monomers to permit their segregation at cell division. It also contributes to the segregational stability of plasmids. In Syntrophus aciditrophicus (strain SB), this protein is Tyrosine recombinase XerC.